The primary structure comprises 476 residues: Glutamate--tRNA ligase (476 aa).

The 'HIGH' region signature appears at 9–19 (PSPTGKLHIGT). Over residues 109 to 129 (REEQKSRNKPPRYDNRHRSLS) the composition is skewed to basic and acidic residues. A disordered region spans residues 109–133 (REEQKSRNKPPRYDNRHRSLSTEEE). Positions 248–252 (KLSKR) match the 'KMSKS' region motif. An ATP-binding site is contributed by K251.

Belongs to the class-I aminoacyl-tRNA synthetase family. Glutamate--tRNA ligase type 1 subfamily. As to quaternary structure, monomer.

It localises to the cytoplasm. It carries out the reaction tRNA(Glu) + L-glutamate + ATP = L-glutamyl-tRNA(Glu) + AMP + diphosphate. In terms of biological role, catalyzes the attachment of glutamate to tRNA(Glu) in a two-step reaction: glutamate is first activated by ATP to form Glu-AMP and then transferred to the acceptor end of tRNA(Glu). This Prochlorococcus marinus (strain MIT 9211) protein is Glutamate--tRNA ligase.